The following is a 777-amino-acid chain: Serine/threonine-protein kinase PTK2 (777 aa).

Positions 21–174 are disordered; sequence NKLRGNNDST…ISSGSASSTN (154 aa). Over residues 30–41 the composition is skewed to low complexity; sequence TPAAAPAPVPTK. 2 stretches are compositionally biased toward polar residues: residues 50-61 and 83-133; these read AHISRSASTNTP and RRST…SQHM. A compositionally biased stretch (low complexity) spans 149-172; sequence SSVRGSSYSRHGSGSHISSGSASS. Residues 222–529 form the Protein kinase domain; sequence DKDNKTIGSG…MEDLFNDPWF (308 aa). ATP-binding positions include 228–236 and Lys252; that span reads IGSGGSSEV. The active-site Proton acceptor is the Asp355. Disordered stretches follow at residues 564 to 705 and 728 to 764; these read DAHP…EITE and SVSG…KKVV. Composition is skewed to polar residues over residues 575-592 and 648-672; these read TDTN…AGTH and TNTT…TNEF. The span at 677–694 shows a compositional bias: low complexity; that stretch reads NATTTDNDNVNTKATTAD. Over residues 744-756 the composition is skewed to polar residues; it reads NRSIHSNATSTGT.

It belongs to the protein kinase superfamily. Ser/Thr protein kinase family.

The catalysed reaction is L-seryl-[protein] + ATP = O-phospho-L-seryl-[protein] + ADP + H(+). It catalyses the reaction L-threonyl-[protein] + ATP = O-phospho-L-threonyl-[protein] + ADP + H(+). The chain is Serine/threonine-protein kinase PTK2 (PTK2) from Candida glabrata (strain ATCC 2001 / BCRC 20586 / JCM 3761 / NBRC 0622 / NRRL Y-65 / CBS 138) (Yeast).